A 204-amino-acid polypeptide reads, in one-letter code: Peptide chain release factor homolog (204 aa).

An rRNA-recognition domain, N-terminus region spans residues 2-98 (ILLQLSSAQG…KNWFLGIGRF (97 aa)). Positions 99-107 (TADEQEQSD) are linker 1. Positions 108–161 (AIRYETLRSSGPGGQHVNKTDSAVRATHLASGISVKVQSERSQHANKRLARLLI) are GGQ domain. Residues 120–122 (GGQ) carry the GGQ motif motif. The linker 2 stretch occupies residues 162-179 (AWKLEQQQQENSAALKSQ). Residues 180-204 (RRMFHHQIERGNPRRTFTGMAFIEG) are rRNA-recognition domain, C-terminus.

The protein belongs to the prokaryotic/mitochondrial release factor family. In terms of assembly, found in the A site of damaged 70S ribosomes, but not in undamaged ribosomes. Contacts (damaged) 16S rRNA, 23S rRNA and ribosomal protein uS12, but not mRNA.

In terms of biological role, peptide chain release-like factor that acts on 70S ribosomes with specific damage to their decoding center (cleavage of 16S rRNA between adenine-1493 and guanosine-1494, E.coli 16S rRNA numbering). Probably acts as a peptidyl-tRNA hydrolase, allowing release of the nascent chain and dissociation of the 30S and 50S subunits. Can release mRNA as short as 19 nucleotides (nt, mRNA-19, which has a single amino acid in the P-site and only a single nt in the A-site) from the ribosome. This specific cleavage is inflicted by CdiA (ECL_04451) or by colicin E3-type (ColE3) proteins. In vivo the PrfH-RtcB2 pair restores growth in the presence of ribotoxins that specifically create this damage. This Escherichia coli (strain ATCC 25922 / DSM 1103 / LMG 8223 / NCIMB 12210 / NCTC 12241 / WDCM 00013 / Seattle 1946) protein is Peptide chain release factor homolog.